We begin with the raw amino-acid sequence, 890 residues long: Protein FAM171A1 (890 aa).

Residues 1 to 21 (MSRSAALLLCLLGCHVWKAVT) form the signal peptide. Residues 22 to 303 (KTLREPGAGA…VTQDITTYHT (282 aa)) lie on the Extracellular side of the membrane. Residues N190 and N194 are each glycosylated (N-linked (GlcNAc...) asparagine). A helical membrane pass occupies residues 304–324 (VFLLAILGGMAFILLVLLCLL). Topologically, residues 325-890 (LYYCRRKCMK…ERPLMAFNIK (566 aa)) are cytoplasmic. 6 positions are modified to phosphoserine: S358, S360, S371, S422, S443, and S525. Disordered regions lie at residues 730-759 (AGRNGSNDASLDSGVDMNEPKSARKGRGDA) and 818-890 (EGSS…FNIK). The segment covering 747 to 757 (NEPKSARKGRG) has biased composition (basic and acidic residues). Polar residues predominate over residues 822-833 (RRSGGQLPSLQE). S849 and S855 each carry phosphoserine. The span at 858–869 (EEEEDDDDDDQG) shows a compositional bias: acidic residues. Over residues 870–883 (EDKKSPWQKREERP) the composition is skewed to basic and acidic residues.

This sequence belongs to the FAM171 family. In terms of assembly, interacts with ADAM10, NSG1 and OAZ1.

The protein resides in the cell membrane. Functionally, involved in the regulation of the cytoskeletal dynamics, plays a role in actin stress fiber formation. The sequence is that of Protein FAM171A1 (FAM171A1) from Pongo abelii (Sumatran orangutan).